Here is a 141-residue protein sequence, read N- to C-terminus: MATLQVDVVSAEEAIFAGEAKFVTLPGEAGELGILPGHTPLISRIRPGTVKIVRADGGEENIFVAGGILEVQPGMVTVLADTAIRAADLDEARAVAAREKAEEALRNAKDKADIAVVEAELAMLAAQAVAARKLRQTRNTH.

The protein belongs to the ATPase epsilon chain family. F-type ATPases have 2 components, CF(1) - the catalytic core - and CF(0) - the membrane proton channel. CF(1) has five subunits: alpha(3), beta(3), gamma(1), delta(1), epsilon(1). CF(0) has three main subunits: a, b and c.

It localises to the cell inner membrane. Functionally, produces ATP from ADP in the presence of a proton gradient across the membrane. This chain is ATP synthase epsilon chain, found in Bordetella petrii (strain ATCC BAA-461 / DSM 12804 / CCUG 43448).